A 102-amino-acid chain; its full sequence is Gastrin/cholecystokinin-like peptide (102 aa).

A signal peptide spans 1–20 (MDKKVCVSILLAMLAIAALC). The propeptide occupies 21–45 (RPMTELESARHGAQRKNSISDVSRR). The residue at position 86 (tyrosine 86) is a Sulfotyrosine. Phenylalanine amide is present on phenylalanine 92. The propeptide occupies 96–102 (SSEVTES).

Belongs to the gastrin/cholecystokinin family. In terms of tissue distribution, expressed in antrum, duodenum, colon, pancreas, brain and testis. No expression found in kidney, lung, liver, skin or distal two-thirds of small intestine. In the brain, strongly expressed in the pituitary gland with moderate expression in the neural lobe, brain stem and hypothalamus.

Its subcellular location is the secreted. In terms of biological role, may control digestion processes. This Aquarana catesbeiana (American bullfrog) protein is Gastrin/cholecystokinin-like peptide (GAST).